Here is a 443-residue protein sequence, read N- to C-terminus: Thymidine phosphorylase (443 aa).

The protein belongs to the thymidine/pyrimidine-nucleoside phosphorylase family. Homodimer.

The catalysed reaction is thymidine + phosphate = 2-deoxy-alpha-D-ribose 1-phosphate + thymine. Its pathway is pyrimidine metabolism; dTMP biosynthesis via salvage pathway; dTMP from thymine: step 1/2. Its function is as follows. The enzymes which catalyze the reversible phosphorolysis of pyrimidine nucleosides are involved in the degradation of these compounds and in their utilization as carbon and energy sources, or in the rescue of pyrimidine bases for nucleotide synthesis. This Shewanella putrefaciens (strain CN-32 / ATCC BAA-453) protein is Thymidine phosphorylase.